A 349-amino-acid polypeptide reads, in one-letter code: Phosphoribosylformylglycinamidine cyclo-ligase (349 aa).

It belongs to the AIR synthase family.

It is found in the cytoplasm. The catalysed reaction is 2-formamido-N(1)-(5-O-phospho-beta-D-ribosyl)acetamidine + ATP = 5-amino-1-(5-phospho-beta-D-ribosyl)imidazole + ADP + phosphate + H(+). The protein operates within purine metabolism; IMP biosynthesis via de novo pathway; 5-amino-1-(5-phospho-D-ribosyl)imidazole from N(2)-formyl-N(1)-(5-phospho-D-ribosyl)glycinamide: step 2/2. The sequence is that of Phosphoribosylformylglycinamidine cyclo-ligase from Bordetella petrii (strain ATCC BAA-461 / DSM 12804 / CCUG 43448).